The following is a 481-amino-acid chain: Pre-mRNA-splicing factor sap114 (481 aa).

A compositionally biased stretch (polar residues) spans 1-15; sequence MSSLMEFQDRNTTNN. Residues 1 to 34 are disordered; it reads MSSLMEFQDRNTTNNETEHQKSITDQSSSVPAGV. 2 SURP motif repeats span residues 44-86 and 147-189; these read IIDK…HPYY and VLRL…YPYF. Disordered stretches follow at residues 335 to 373 and 452 to 481; these read PSLA…QKPV and GVEI…NKRR. 2 stretches are compositionally biased toward polar residues: residues 345 to 368 and 467 to 481; these read ISST…TQPK and ATQS…NKRR.

In terms of assembly, belongs to the 40S cdc5-associated complex (or cwf complex), a spliceosome sub-complex reminiscent of a late-stage spliceosome composed of the U2, U5 and U6 snRNAs and at least brr2, cdc5, cwf2/prp3, cwf3/syf1, cwf4/syf3, cwf5/ecm2, spp42/cwf6, cwf7/spf27, cwf8, cwf9, cwf10, cwf11, cwf12, prp45/cwf13, cwf14, cwf15, cwf16, cwf17, cwf18, cwf19, cwf20, cwf21, cwf22, cwf23, cwf24, cwf25, cwf26, cyp7/cwf27, cwf28, cwf29/ist3, lea1, msl1, prp5/cwf1, prp10, prp12/sap130, prp17, prp22, sap61, sap62, sap114, sap145, slu7, smb1, smd1, smd3, smf1, smg1 and syf2.

The protein resides in the nucleus. Involved in pre-mRNA splicing. May be involved in endoplasmic reticulum-associated protein degradation (ERAD) and required for growth at low and high temperatures. This chain is Pre-mRNA-splicing factor sap114 (sap114), found in Schizosaccharomyces pombe (strain 972 / ATCC 24843) (Fission yeast).